Reading from the N-terminus, the 609-residue chain is Copper resistance protein A (609 aa).

The segment at residues 1–32 (MESRTSRRTFVKGLAAAGVLGGLGLWRSPSWA) is a signal peptide (tat-type signal). 4 residues coordinate Cu cation: His100, His102, His142, and His144. Tandem repeats lie at residues 367-374 (DDMGMGGM), 375-382 (DHGSMDGM), 408-415 (DHSKMSTM), 419-426 (DHGAMSGM), and 427-434 (DHGAMGGM). The interval 367 to 434 (DDMGMGGMDH…GMDHGAMGGM (68 aa)) is 5 X 8 AA tandem repeats of D-H-X-X-M-X-G-M. Cu cation contacts are provided by His542, His545, His547, His590, Cys591, His592, His596, and Met601.

It belongs to the multicopper oxidase family. CopA subfamily. Post-translationally, predicted to be exported by the Tat system. The position of the signal peptide cleavage has been experimentally proven.

Its subcellular location is the periplasm. Its function is as follows. Mediates copper resistance by sequestration of copper in the periplasm along with the copper-binding protein CopC. May have oxidase activity. This chain is Copper resistance protein A (copA), found in Pseudomonas syringae pv. tomato.